Reading from the N-terminus, the 171-residue chain is MFLVKMVLGFLILLSPLCATGLDVSQTDIIERSLNFLLFAGILWYFLAKKLRSFLRSKSLEISKRLEEIQAQLKVSKENKKKLLKELEQAKEKAELIISDANKEAYTITQKYELQTKMDVENLIKNSKALMDLEVKKIKRELVESVFKDLRESKKVSFNVQDCVNILKQRL.

A helical membrane pass occupies residues 2–22 (FLVKMVLGFLILLSPLCATGL).

It belongs to the ATPase B chain family. In terms of assembly, F-type ATPases have 2 components, F(1) - the catalytic core - and F(0) - the membrane proton channel. F(1) has five subunits: alpha(3), beta(3), gamma(1), delta(1), epsilon(1). F(0) has three main subunits: a(1), b(2) and c(10-14). The alpha and beta chains form an alternating ring which encloses part of the gamma chain. F(1) is attached to F(0) by a central stalk formed by the gamma and epsilon chains, while a peripheral stalk is formed by the delta and b chains.

The protein localises to the cell inner membrane. F(1)F(0) ATP synthase produces ATP from ADP in the presence of a proton or sodium gradient. F-type ATPases consist of two structural domains, F(1) containing the extramembraneous catalytic core and F(0) containing the membrane proton channel, linked together by a central stalk and a peripheral stalk. During catalysis, ATP synthesis in the catalytic domain of F(1) is coupled via a rotary mechanism of the central stalk subunits to proton translocation. Its function is as follows. Component of the F(0) channel, it forms part of the peripheral stalk, linking F(1) to F(0). This Helicobacter pylori (strain HPAG1) protein is ATP synthase subunit b.